The sequence spans 69 residues: MRIFYYLHFLCYVTFILPATCTLVNADRCTKRYGRCKRDCLESEKQIDICSLPRKICCTEKLYEEDDMF.

A signal peptide spans 1–26; the sequence is MRIFYYLHFLCYVTFILPATCTLVNA. 3 disulfide bridges follow: cysteine 29–cysteine 57, cysteine 36–cysteine 50, and cysteine 40–cysteine 58.

Belongs to the beta-defensin family. As to expression, expressed in epididymis, predominantly in the caput (at protein level).

The protein localises to the secreted. Its function is as follows. Has a salt-sensitive antimicrobial activity against Gram-negative bacteria, including E.coli, Gram-positive, including S.aureus, and fungi, including C.albicans. Binds to and neutralizes bacterial lipopolysaccharides (LPS), abolishing TNF production by macrophages challenged with LPS. Rescues the LPS-induced reduction of sperm motility in vitro and may protect from LPS-induced lethality. The chain is Beta-defensin 114 (DEFB114) from Homo sapiens (Human).